The sequence spans 588 residues: DELLA protein GAI (588 aa).

Residues 1–15 (MKRDRDRDREREKRA) are compositionally biased toward basic and acidic residues. Residues 1–38 (MKRDRDRDREREKRAFSNGAVSSGKSKIWEEDEEEKPD) form a disordered region. Residues 42-46 (DELLA) carry the DELLA motif motif. The segment at 152–177 (GAVFNSDSNKRHRSTTSSFSTTSSSM) is disordered. Residues 166-177 (TTSSFSTTSSSM) are compositionally biased toward low complexity. Residues 190-574 (VDSQETGVRL…RPLIATSAWK (385 aa)) enclose the GRAS domain. A leucine repeat I (LRI) region spans residues 197 to 251 (VRLVHTLMACAEAVQQENLTLADQLVRHIGILAVSQSGAMRKVATYFAEALARRI). The tract at residues 269-334 (QMHFYETCPY…GGPPAFRLTG (66 aa)) is VHIID. The VHIID motif lies at 300 to 304 (VHVID). Residues 348–380 (QVGWKLAQLAETIGVEFEFRGFVANSLADLDAT) form a leucine repeat II (LRII) region. A PFYRE region spans residues 392–495 (VAINSVFELH…EVYLGRQICN (104 aa)). Positions 400-404 (LHRLL) match the LXXLL motif motif. An SAW region spans residues 498–574 (ACEGSDRVER…RPLIATSAWK (77 aa)).

It belongs to the GRAS family. DELLA subfamily. In terms of processing, phosphorylated. Post-translationally, ubiquitinated. Upon GA application it is ubiquitinated, leading to its subsequent degradation. Expressed in both vegetative and reproductive tissues.

The protein resides in the nucleus. In terms of biological role, probable transcriptional regulator that acts as a repressor of the gibberellin (GA) signaling pathway. Probably acts by participating in large multiprotein complexes that repress transcription of GA-inducible genes. Upon GA application, it is degraded by the proteasome, allowing the GA signaling pathway. Its degradation is not essential for germination. This Solanum lycopersicum (Tomato) protein is DELLA protein GAI (GAI).